The following is a 455-amino-acid chain: Bifunctional protein GlmU (455 aa).

The tract at residues 1 to 226 (MGLSVVILAA…EFEILGVNDR (226 aa)) is pyrophosphorylase. Residues 8-11 (LAAG), K22, Q73, 78-79 (GT), 99-101 (YGD), G136, E151, N166, and N224 each bind UDP-N-acetyl-alpha-D-glucosamine. A Mg(2+)-binding site is contributed by D101. Position 224 (N224) interacts with Mg(2+). Residues 227-247 (TQLASLERVWQRNVAEKIMAK) are linker. An N-acetyltransferase region spans residues 248–455 (GVSIADPNRF…WQRSVKKTDK (208 aa)). Residues R330 and K348 each coordinate UDP-N-acetyl-alpha-D-glucosamine. H360 serves as the catalytic Proton acceptor. UDP-N-acetyl-alpha-D-glucosamine-binding residues include Y363 and N374. Acetyl-CoA contacts are provided by residues A377, 383-384 (NY), S402, A420, and R437.

The protein in the N-terminal section; belongs to the N-acetylglucosamine-1-phosphate uridyltransferase family. It in the C-terminal section; belongs to the transferase hexapeptide repeat family. In terms of assembly, homotrimer. Requires Mg(2+) as cofactor.

The protein resides in the cytoplasm. The catalysed reaction is alpha-D-glucosamine 1-phosphate + acetyl-CoA = N-acetyl-alpha-D-glucosamine 1-phosphate + CoA + H(+). It carries out the reaction N-acetyl-alpha-D-glucosamine 1-phosphate + UTP + H(+) = UDP-N-acetyl-alpha-D-glucosamine + diphosphate. It participates in nucleotide-sugar biosynthesis; UDP-N-acetyl-alpha-D-glucosamine biosynthesis; N-acetyl-alpha-D-glucosamine 1-phosphate from alpha-D-glucosamine 6-phosphate (route II): step 2/2. It functions in the pathway nucleotide-sugar biosynthesis; UDP-N-acetyl-alpha-D-glucosamine biosynthesis; UDP-N-acetyl-alpha-D-glucosamine from N-acetyl-alpha-D-glucosamine 1-phosphate: step 1/1. The protein operates within bacterial outer membrane biogenesis; LPS lipid A biosynthesis. Its function is as follows. Catalyzes the last two sequential reactions in the de novo biosynthetic pathway for UDP-N-acetylglucosamine (UDP-GlcNAc). The C-terminal domain catalyzes the transfer of acetyl group from acetyl coenzyme A to glucosamine-1-phosphate (GlcN-1-P) to produce N-acetylglucosamine-1-phosphate (GlcNAc-1-P), which is converted into UDP-GlcNAc by the transfer of uridine 5-monophosphate (from uridine 5-triphosphate), a reaction catalyzed by the N-terminal domain. This Francisella tularensis subsp. tularensis (strain SCHU S4 / Schu 4) protein is Bifunctional protein GlmU.